A 417-amino-acid chain; its full sequence is Gamma-glutamyl phosphate reductase (417 aa).

Belongs to the gamma-glutamyl phosphate reductase family.

The protein localises to the cytoplasm. The enzyme catalyses L-glutamate 5-semialdehyde + phosphate + NADP(+) = L-glutamyl 5-phosphate + NADPH + H(+). It participates in amino-acid biosynthesis; L-proline biosynthesis; L-glutamate 5-semialdehyde from L-glutamate: step 2/2. Catalyzes the NADPH-dependent reduction of L-glutamate 5-phosphate into L-glutamate 5-semialdehyde and phosphate. The product spontaneously undergoes cyclization to form 1-pyrroline-5-carboxylate. This chain is Gamma-glutamyl phosphate reductase, found in Escherichia fergusonii (strain ATCC 35469 / DSM 13698 / CCUG 18766 / IAM 14443 / JCM 21226 / LMG 7866 / NBRC 102419 / NCTC 12128 / CDC 0568-73).